Reading from the N-terminus, the 352-residue chain is PhoH-like protein (352 aa).

Residues 1-21 (MTSRETRAADAAGARQADAQV) form a disordered region. Over residues 9 to 20 (ADAAGARQADAQ) the composition is skewed to low complexity. Residue 150-157 (GPAGTGKT) participates in ATP binding.

Belongs to the PhoH family.

The protein localises to the cytoplasm. In Mycobacterium bovis (strain ATCC BAA-935 / AF2122/97), this protein is PhoH-like protein.